Consider the following 316-residue polypeptide: Ester hydrolase C11orf54 homolog (316 aa).

Residues H267, H269, and H279 each coordinate Zn(2+).

In terms of assembly, monomer. Requires Zn(2+) as cofactor.

The protein localises to the nucleus. The protein resides in the cytoplasm. Functionally, exhibits ester hydrolase activity on the substrate p-nitrophenyl acetate, in vitro. May regulate DNA damage and repair by regulating HIF1A degradation via chaperone-mediated autophagy (CMA). The protein is Ester hydrolase C11orf54 homolog of Xenopus laevis (African clawed frog).